A 174-amino-acid chain; its full sequence is Pituitary tumor-transforming gene 1 protein-interacting protein (174 aa).

Residues 1–29 (MASAVLGLTLRWVMFLSAVLLLLLPGASA) form the signal peptide. Residues 30–93 (QEPPGVGCSE…RWGVCWVNFE (64 aa)) are Extracellular-facing. The PSI domain occupies 36 to 89 (GCSEYTNRSCEECLRNVSCLWCNENKACLDYPVRKILPPASLCKLSSARWGVCW). N-linked (GlcNAc...) asparagine glycosylation is found at Asn-42 and Asn-51. The chain crosses the membrane as a helical span at residues 94 to 114 (ALIITMSVLGGSVLLGITVCC). The Cytoplasmic portion of the chain corresponds to 115-174 (CCCCRRKRSRKPDKSDERAMREQEERRVRQEERRAEMKSRHDEIRKKYGLFKEQNPYEKF). The disordered stretch occupies residues 126 to 155 (PDKSDERAMREQEERRVRQEERRAEMKSRH). Positions 127 to 163 (DKSDERAMREQEERRVRQEERRAEMKSRHDEIRKKYG) form a coiled coil. Tyr-171 bears the Phosphotyrosine mark.

In terms of assembly, interacts with PTTG1.

It is found in the cell membrane. It localises to the cytoplasm. The protein localises to the nucleus. May facilitate PTTG1 nuclear translocation. This is Pituitary tumor-transforming gene 1 protein-interacting protein (Pttg1ip) from Rattus norvegicus (Rat).